Reading from the N-terminus, the 434-residue chain is Bifunctional protein GlmU (434 aa).

The segment at 1 to 226 (MNKNKISIVI…ENEYKGVNSK (226 aa)) is pyrophosphorylase. UDP-N-acetyl-alpha-D-glucosamine is bound by residues 11 to 14 (LAAG), Lys25, Gln77, and 84 to 85 (GT). Mg(2+) is bound at residue Asp105. Gly138, Glu152, Asn167, and Asn224 together coordinate UDP-N-acetyl-alpha-D-glucosamine. Position 224 (Asn224) interacts with Mg(2+). Positions 227 to 247 (KDLSDAEIIMQDKIKNSLMES) are linker. The segment at 248 to 434 (GVTMQLPSTI…DFYYKFFAKK (187 aa)) is N-acetyltransferase. Residues Arg311 and Lys328 each contribute to the UDP-N-acetyl-alpha-D-glucosamine site. His339 acts as the Proton acceptor in catalysis. UDP-N-acetyl-alpha-D-glucosamine-binding residues include Tyr342 and Asn353. Acetyl-CoA-binding positions include Ala356, 362–363 (NY), Ser381, and Ala399.

It in the N-terminal section; belongs to the N-acetylglucosamine-1-phosphate uridyltransferase family. This sequence in the C-terminal section; belongs to the transferase hexapeptide repeat family. As to quaternary structure, homotrimer. Requires Mg(2+) as cofactor.

The protein resides in the cytoplasm. It catalyses the reaction alpha-D-glucosamine 1-phosphate + acetyl-CoA = N-acetyl-alpha-D-glucosamine 1-phosphate + CoA + H(+). The catalysed reaction is N-acetyl-alpha-D-glucosamine 1-phosphate + UTP + H(+) = UDP-N-acetyl-alpha-D-glucosamine + diphosphate. It participates in nucleotide-sugar biosynthesis; UDP-N-acetyl-alpha-D-glucosamine biosynthesis; N-acetyl-alpha-D-glucosamine 1-phosphate from alpha-D-glucosamine 6-phosphate (route II): step 2/2. The protein operates within nucleotide-sugar biosynthesis; UDP-N-acetyl-alpha-D-glucosamine biosynthesis; UDP-N-acetyl-alpha-D-glucosamine from N-acetyl-alpha-D-glucosamine 1-phosphate: step 1/1. It functions in the pathway bacterial outer membrane biogenesis; LPS lipid A biosynthesis. Its function is as follows. Catalyzes the last two sequential reactions in the de novo biosynthetic pathway for UDP-N-acetylglucosamine (UDP-GlcNAc). The C-terminal domain catalyzes the transfer of acetyl group from acetyl coenzyme A to glucosamine-1-phosphate (GlcN-1-P) to produce N-acetylglucosamine-1-phosphate (GlcNAc-1-P), which is converted into UDP-GlcNAc by the transfer of uridine 5-monophosphate (from uridine 5-triphosphate), a reaction catalyzed by the N-terminal domain. This Sulfurimonas denitrificans (strain ATCC 33889 / DSM 1251) (Thiomicrospira denitrificans (strain ATCC 33889 / DSM 1251)) protein is Bifunctional protein GlmU.